Reading from the N-terminus, the 142-residue chain is Ribosome maturation factor RimP (142 aa).

It belongs to the RimP family.

It localises to the cytoplasm. In terms of biological role, required for maturation of 30S ribosomal subunits. The chain is Ribosome maturation factor RimP from Aromatoleum aromaticum (strain DSM 19018 / LMG 30748 / EbN1) (Azoarcus sp. (strain EbN1)).